Consider the following 194-residue polypeptide: MTGLEIWLLAIGLAMDCLAVSIASGIILRRIQWRPMLIMAFFFGLFQAIMPLLGWLGASTFSHLIESVDHWIAFAILAFLGGRMIKESFKEEDCCQRFNPASLKVVITMAVATSIDALAVGVSFAFLGIKSCSSILYPAGIIGFVSFFMSLIGLIFGIRFGCGIARKLRAELWGGIILILIGTKILIEHLFFNN.

A run of 6 helical transmembrane segments spans residues 8 to 28 (LLAI…GIIL), 36 to 56 (MLIM…LGWL), 61 to 81 (FSHL…AFLG), 109 to 129 (MAVA…FLGI), 138 to 158 (PAGI…IFGI), and 172 to 192 (LWGG…HLFF).

It belongs to the MntP (TC 9.B.29) family.

Its subcellular location is the cell inner membrane. Probably functions as a manganese efflux pump. This is Putative manganese efflux pump MntP from Bacteroides fragilis (strain ATCC 25285 / DSM 2151 / CCUG 4856 / JCM 11019 / LMG 10263 / NCTC 9343 / Onslow / VPI 2553 / EN-2).